The primary structure comprises 252 residues: Cell division protein ZapD (252 aa).

This sequence belongs to the ZapD family. Interacts with FtsZ.

The protein resides in the cytoplasm. Its function is as follows. Cell division factor that enhances FtsZ-ring assembly. Directly interacts with FtsZ and promotes bundling of FtsZ protofilaments, with a reduction in FtsZ GTPase activity. The polypeptide is Cell division protein ZapD (Cupriavidus pinatubonensis (strain JMP 134 / LMG 1197) (Cupriavidus necator (strain JMP 134))).